The primary structure comprises 238 residues: Thrombin-like enzyme collinein-1 (238 aa).

Residues 1-229 (VIGGDECNIN…HLDWIQNIIA (229 aa)) enclose the Peptidase S1 domain. 6 disulfide bridges follow: Cys-7/Cys-141, Cys-28/Cys-44, Cys-78/Cys-236, Cys-120/Cys-190, Cys-152/Cys-169, and Cys-180/Cys-205. Residues His-43 and Asp-88 each act as charge relay system in the active site. The active-site Charge relay system is the Ser-184.

The protein belongs to the peptidase S1 family. Snake venom subfamily. Monomer. In terms of tissue distribution, expressed by the venom gland.

The protein localises to the secreted. With respect to regulation, inhibited by Cu(2+) and, to a lesser extent, by Zn(2+) and Ba(2+). Not inhibited by Ca(2+) and Mg(2+). Functionally, thrombin-like snake venom serine protease. Releases fibrinopeptide A and B in the conversion of fibrinogen to fibrin, with preferential activity on the alpha chain of fibrinogen. Also hydrolyzes N-p-toluensulfonyl arginine ester (TAME) and chromogenic artificial substrates of the blood coagulation cascade: S-2222 for factor Xa, S-2302 for kallikrein and S-2238 for thrombin. When tested in vitro, the recombinant protein does not degrade blood clots, suggesting that this toxin lacks fibrinolytic activity. In addition, it moderately inhibits human Kv10.1/KCNH1/EAG1 currents, with a mechanism independent of its enzymatic activity. It selectively blocks Kv10.1/KCNH1/EAG1 in a time and dose-dependent manner (IC(50)=4.2 uM for native protein and IC(50)=2.5 uM for recombinant protein). It may have a preference in interacting with Kv10.1/KCNH1/EAG1 in its closed state, since the inhibitory effect of the toxin is decreased at more depolarized potentials. Corroboratively, it may have possible antitumor applications, since it reduces the viability of human breast cancer cell line MCF-7, which strongly expresses Kv10.1/KCNH1/EAG1, but does not affect the liver carcinoma and the non-tumorigenic epithelial breast cell lines, which weakly express Kv10.1/KCNH1/EAG1. When tested on peripheral blood mononuclear cells (PBMC), the native protein shows mild cytotoxicity, whereas the recombinant protein does not show any cytotoxicity. Native form is not immununogenic, since it does not induce statistically significant antibody production in mice, whereas recombinant form shows an antibody titer slightly higher than the native form. In vivo, subplantar injection in mice paw induces a discreet paw edema. In addition, intraperitoneal injection of the recombinant protein into mice led to fibrinogen depletion, resulting in the blood incoagulability. This is Thrombin-like enzyme collinein-1 from Crotalus durissus collilineatus (Brazilian rattlesnake).